We begin with the raw amino-acid sequence, 81 residues long: Small ribosomal subunit protein uS17 (81 aa).

It belongs to the universal ribosomal protein uS17 family. As to quaternary structure, part of the 30S ribosomal subunit.

Functionally, one of the primary rRNA binding proteins, it binds specifically to the 5'-end of 16S ribosomal RNA. The sequence is that of Small ribosomal subunit protein uS17 from Methylocella silvestris (strain DSM 15510 / CIP 108128 / LMG 27833 / NCIMB 13906 / BL2).